Reading from the N-terminus, the 103-residue chain is Small ribosomal subunit protein uS10 (103 aa).

Belongs to the universal ribosomal protein uS10 family. Part of the 30S ribosomal subunit.

In terms of biological role, involved in the binding of tRNA to the ribosomes. This chain is Small ribosomal subunit protein uS10, found in Neorickettsia sennetsu (strain ATCC VR-367 / Miyayama) (Ehrlichia sennetsu).